Consider the following 459-residue polypeptide: tRNA modification GTPase MnmE (459 aa).

Positions 23, 86, and 125 each coordinate (6S)-5-formyl-5,6,7,8-tetrahydrofolate. One can recognise a TrmE-type G domain in the interval 221–380 (GLKTVIVGKP…LQDKIESMVY (160 aa)). Asparagine 231 lines the K(+) pocket. GTP-binding positions include 231–236 (NVGKSS), 250–256 (TDIPGTT), and 275–278 (DTAG). Serine 235 lines the Mg(2+) pocket. K(+) is bound by residues threonine 250, isoleucine 252, and threonine 255. Threonine 256 serves as a coordination point for Mg(2+). Lysine 459 is a binding site for (6S)-5-formyl-5,6,7,8-tetrahydrofolate.

Belongs to the TRAFAC class TrmE-Era-EngA-EngB-Septin-like GTPase superfamily. TrmE GTPase family. Homodimer. Heterotetramer of two MnmE and two MnmG subunits. The cofactor is K(+).

The protein localises to the cytoplasm. Functionally, exhibits a very high intrinsic GTPase hydrolysis rate. Involved in the addition of a carboxymethylaminomethyl (cmnm) group at the wobble position (U34) of certain tRNAs, forming tRNA-cmnm(5)s(2)U34. The polypeptide is tRNA modification GTPase MnmE (Clostridioides difficile (strain 630) (Peptoclostridium difficile)).